A 78-amino-acid polypeptide reads, in one-letter code: uncharacterized protein (78 aa).

This is an uncharacterized protein from Dictyostelium discoideum (Social amoeba).